A 203-amino-acid chain; its full sequence is MRYPWFRLAIFVVGCLFPAWWLYEAAMSLLGPDPGKIMMDRLGLGALTFLLVTLCMTPLQKLTGWSGWIVVRRQLGLWVFAYIVLHILAYLFFILGLDWGQLAVELRKRPYIIVGALGFLGLLVLAITSNRYSQRRLGARWKKLHRLVYAVLGLGLLHFLWIVRSDLREWSIYALIGAVLMVLRIPAVARGLPRVARARGRAV.

6 consecutive transmembrane segments (helical) span residues 10–30, 42–62, 75–95, 110–130, 147–167, and 169–189; these read IFVV…MSLL, LGLG…LQKL, LGLW…FFIL, PYII…ITSN, LVYA…RSDL, and EWSI…PAVA.

The protein belongs to the MsrQ family. Heterodimer of a catalytic subunit (MsrP) and a heme-binding subunit (MsrQ). FMN serves as cofactor. Requires heme b as cofactor.

The protein localises to the cell inner membrane. Its function is as follows. Part of the MsrPQ system that repairs oxidized periplasmic proteins containing methionine sulfoxide residues (Met-O), using respiratory chain electrons. Thus protects these proteins from oxidative-stress damage caused by reactive species of oxygen and chlorine generated by the host defense mechanisms. MsrPQ is essential for the maintenance of envelope integrity under bleach stress, rescuing a wide series of structurally unrelated periplasmic proteins from methionine oxidation. MsrQ provides electrons for reduction to the reductase catalytic subunit MsrP, using the quinone pool of the respiratory chain. The chain is Protein-methionine-sulfoxide reductase heme-binding subunit MsrQ from Pseudomonas putida (strain GB-1).